Here is a 415-residue protein sequence, read N- to C-terminus: Putative O-antigen transporter (415 aa).

Over 1–11 the chain is Cytoplasmic; it reads MNTNKLSLRRN. Residues 12 to 32 traverse the membrane as a helical segment; it reads VIYLAVVQGSNYLLPLLTFPY. At 33 to 41 the chain is on the periplasmic side; sequence LVRTLGPEN. A helical membrane pass occupies residues 42 to 62; the sequence is FGIFGFCQATMLYMIMFVEYG. The Cytoplasmic segment spans residues 63–83; sequence FNLTATQSIAKAADSKDKVTS. Residues 84–104 traverse the membrane as a helical segment; the sequence is IFWAVIFSKIVLIVITLIFLT. At 105 to 117 the chain is on the periplasmic side; sequence SMTLLVPEYNKHA. The chain crosses the membrane as a helical span at residues 118–138; the sequence is VIIWSFVPALVGNLIYPIWLF. The Cytoplasmic portion of the chain corresponds to 139–173; the sequence is QGKEKMKWLTLSSILSRLAIIPLTFIFVNTKSDIA. A helical membrane pass occupies residues 174–194; that stretch reads IAGFIQSSANLVAGIIALAIV. Residues 195 to 220 are Periplasmic-facing; that stretch reads VHEGWIGKVTLSLHNVRRSLADGFHV. The helical transmembrane segment at 221-241 threads the bilayer; that stretch reads FISTSAISLYSTGIVIILGFI. Topologically, residues 242–295 are cytoplasmic; the sequence is SGPTSVGNFNAANTIRNALQGLLNPITQAIYPRISSTLVLNRVKGVILIKKSLT. A helical transmembrane segment spans residues 296–316; sequence CLSLIGGAFSLILLLGASILV. The Periplasmic segment spans residues 317–328; the sequence is KISIGPGYDNAV. Residues 329–349 form a helical membrane-spanning segment; sequence IVLMIISPLPFLISLSNVYGI. At 350–362 the chain is on the cytoplasmic side; that stretch reads QVMLTHNYKKEFS. The chain crosses the membrane as a helical span at residues 363 to 383; it reads KILIAAGLLSLLLIFPLTTLF. The Periplasmic segment spans residues 384–385; it reads KE. The helical transmembrane segment at 386-406 threads the bilayer; sequence IGAAITLLATECLVTSLMLMF. Residues 407–415 are Cytoplasmic-facing; sequence VRNNKLLVC.

This sequence belongs to the polysaccharide synthase family.

Its subcellular location is the cell inner membrane. Its pathway is bacterial outer membrane biogenesis; LPS O-antigen biosynthesis. Its function is as follows. May be involved in the translocation process of the nascent O-polysaccharide molecules and/or its ligation to lipid A core units. The chain is Putative O-antigen transporter (rfbX) from Escherichia coli (strain K12).